The chain runs to 447 residues: tRNA modification GTPase MnmE (447 aa).

Residues R24, E81, and K120 each coordinate (6S)-5-formyl-5,6,7,8-tetrahydrofolate. Residues 216-371 (GLNVVIAGKP…LRKELSDIAG (156 aa)) enclose the TrmE-type G domain. N226 serves as a coordination point for K(+). Residues 226-231 (NAGKSS), 245-251 (TDIAGTT), and 270-273 (DTAG) contribute to the GTP site. S230 provides a ligand contact to Mg(2+). K(+) contacts are provided by T245, I247, and T250. Residue T251 coordinates Mg(2+). K447 lines the (6S)-5-formyl-5,6,7,8-tetrahydrofolate pocket.

This sequence belongs to the TRAFAC class TrmE-Era-EngA-EngB-Septin-like GTPase superfamily. TrmE GTPase family. Homodimer. Heterotetramer of two MnmE and two MnmG subunits. Requires K(+) as cofactor.

The protein resides in the cytoplasm. Its function is as follows. Exhibits a very high intrinsic GTPase hydrolysis rate. Involved in the addition of a carboxymethylaminomethyl (cmnm) group at the wobble position (U34) of certain tRNAs, forming tRNA-cmnm(5)s(2)U34. This chain is tRNA modification GTPase MnmE, found in Ruthia magnifica subsp. Calyptogena magnifica.